A 546-amino-acid polypeptide reads, in one-letter code: 3-(3-hydroxy-phenyl)propionate/3-hydroxycinnamic acid hydroxylase 2 (546 aa).

FAD contacts are provided by residues serine 10–arginine 39 and phenylalanine 278–aspartate 288.

The protein belongs to the PheA/TfdB FAD monooxygenase family. Requires FAD as cofactor.

The enzyme catalyses 3-(3-hydroxyphenyl)propanoate + NADH + O2 + H(+) = 3-(2,3-dihydroxyphenyl)propanoate + NAD(+) + H2O. The catalysed reaction is (2E)-3-(3-hydroxyphenyl)prop-2-enoate + NADH + O2 + H(+) = (2E)-3-(2,3-dihydroxyphenyl)prop-2-enoate + NAD(+) + H2O. Its pathway is aromatic compound metabolism; 3-phenylpropanoate degradation. Catalyzes the insertion of one atom of molecular oxygen into position 2 of the phenyl ring of 3-(3-hydroxyphenyl)propionate (3-HPP) and hydroxycinnamic acid (3HCI). This is 3-(3-hydroxy-phenyl)propionate/3-hydroxycinnamic acid hydroxylase 2 from Burkholderia vietnamiensis (strain G4 / LMG 22486) (Burkholderia cepacia (strain R1808)).